Consider the following 316-residue polypeptide: N-acetylmuramic acid 6-phosphate etherase (316 aa).

A disordered region spans residues M1 to P24. Residues I66 to K229 enclose the SIS domain. The active-site Proton donor is the E94. Residue E125 is part of the active site.

This sequence belongs to the GCKR-like family. MurNAc-6-P etherase subfamily. In terms of assembly, homodimer.

It carries out the reaction N-acetyl-D-muramate 6-phosphate + H2O = N-acetyl-D-glucosamine 6-phosphate + (R)-lactate. It participates in amino-sugar metabolism; N-acetylmuramate degradation. In terms of biological role, specifically catalyzes the cleavage of the D-lactyl ether substituent of MurNAc 6-phosphate, producing GlcNAc 6-phosphate and D-lactate. The chain is N-acetylmuramic acid 6-phosphate etherase from Parasynechococcus marenigrum (strain WH8102).